The chain runs to 264 residues: Thymidylate synthase (264 aa).

Arg21 lines the dUMP pocket. His51 is a binding site for (6R)-5,10-methylene-5,6,7,8-tetrahydrofolate. 126–127 (RR) is a dUMP binding site. Cys146 serves as the catalytic Nucleophile. Residues 166 to 169 (RSAD), Asn177, and 207 to 209 (HLY) each bind dUMP. Asp169 contributes to the (6R)-5,10-methylene-5,6,7,8-tetrahydrofolate binding site. Ala263 lines the (6R)-5,10-methylene-5,6,7,8-tetrahydrofolate pocket.

It belongs to the thymidylate synthase family. Bacterial-type ThyA subfamily. Homodimer.

Its subcellular location is the cytoplasm. It carries out the reaction dUMP + (6R)-5,10-methylene-5,6,7,8-tetrahydrofolate = 7,8-dihydrofolate + dTMP. The protein operates within pyrimidine metabolism; dTTP biosynthesis. Catalyzes the reductive methylation of 2'-deoxyuridine-5'-monophosphate (dUMP) to 2'-deoxythymidine-5'-monophosphate (dTMP) while utilizing 5,10-methylenetetrahydrofolate (mTHF) as the methyl donor and reductant in the reaction, yielding dihydrofolate (DHF) as a by-product. This enzymatic reaction provides an intracellular de novo source of dTMP, an essential precursor for DNA biosynthesis. This Legionella pneumophila subsp. pneumophila (strain Philadelphia 1 / ATCC 33152 / DSM 7513) protein is Thymidylate synthase.